The primary structure comprises 510 residues: Cytochrome P450 52C2 (510 aa).

Residue cysteine 458 coordinates heme.

It belongs to the cytochrome P450 family. The cofactor is heme.

The protein localises to the membrane. Together with an NADPH cytochrome P450 the enzyme system catalyzes the terminal hydroxylation as the first step in the assimilation of alkanes and fatty acids. The chain is Cytochrome P450 52C2 (CYP52C2) from Candida maltosa (Yeast).